A 1435-amino-acid chain; its full sequence is Sterol 3-beta-glucosyltransferase (1435 aa).

Disordered regions lie at residues 1-26, 75-107, 123-169, and 185-206; these read MAPDDESKKRATRKSTKRWKEEHQVA, SDEEYDLGKPTRQSSESHINRSSIDQKMGKFEG, RFSS…KDTP, and PSFEMPRKSKDPAEVDDERTSP. Over residues 85 to 99 the composition is skewed to polar residues; it reads TRQSSESHINRSSID. A compositionally biased stretch (low complexity) spans 123-133; the sequence is RFSSRSKSKSS. Over residues 134–143 the composition is skewed to polar residues; the sequence is NTIARGSRTP. The span at 189-206 shows a compositional bias: basic and acidic residues; sequence MPRKSKDPAEVDDERTSP. A GRAM 1 domain is found at 211-258; that stretch reads ERLMEIFKFETPEDVLEEYPCWLMKSVLLQGYMYITTKHICFYAYLPK. In terms of domain architecture, PH spans 262–360; sequence EVVKSGYLSK…WVKALQKIIF (99 aa). Disordered regions lie at residues 444–477, 527–594, 610–671, and 727–759; these read LSTADDSRGSSKRTSFQVSRDRKLHGPSVQPNAP, DLNR…QASA, QHSP…QAEI, and GKKHYEEPHGIPRDNEMPSIGDDDDNRDGATPA. Basic and acidic residues predominate over residues 527–537; the sequence is DLNRLTTEHHR. Polar residues-rich tracts occupy residues 539–554, 628–647, and 657–671; these read NSANSISTRRSLSTNR, KSRSLTSPIKSADVSPTRTQ, and TTGSVSDSNVGQAEI. Residues 729–742 show a composition bias toward basic and acidic residues; that stretch reads KHYEEPHGIPRDNE. A GRAM 2 domain is found at 760-826; sequence DRFRDHFALP…KDIENVDKEK (67 aa). Residues S949, R950, D952, A1252, H1254, H1267, G1271, T1272, D1291, and Q1292 each coordinate UDP-alpha-D-glucose.

It belongs to the glycosyltransferase 28 family.

The protein resides in the cytoplasm. It is found in the preautophagosomal structure membrane. The enzyme catalyses a sterol + UDP-alpha-D-glucose = a sterol 3-beta-D-glucoside + UDP + H(+). It carries out the reaction ergosterol + UDP-alpha-D-glucose = ergosteryl 3-beta-D-glucoside + UDP + H(+). In terms of biological role, sterol glycosyltransferase responsible for the glycosylation of ergosterol to form ergosterol-glucoside. This chain is Sterol 3-beta-glucosyltransferase, found in Sclerotinia sclerotiorum (strain ATCC 18683 / 1980 / Ss-1) (White mold).